The chain runs to 464 residues: 3-isopropylmalate dehydratase large subunit (464 aa).

3 residues coordinate [4Fe-4S] cluster: C337, C397, and C400.

The protein belongs to the aconitase/IPM isomerase family. LeuC type 1 subfamily. Heterodimer of LeuC and LeuD. [4Fe-4S] cluster is required as a cofactor.

The enzyme catalyses (2R,3S)-3-isopropylmalate = (2S)-2-isopropylmalate. It functions in the pathway amino-acid biosynthesis; L-leucine biosynthesis; L-leucine from 3-methyl-2-oxobutanoate: step 2/4. Functionally, catalyzes the isomerization between 2-isopropylmalate and 3-isopropylmalate, via the formation of 2-isopropylmaleate. The chain is 3-isopropylmalate dehydratase large subunit from Bacillus thuringiensis (strain Al Hakam).